A 281-amino-acid chain; its full sequence is Endonuclease III-like protein 1 (281 aa).

A mitochondrion-targeting transit peptide spans 1 to 17; it reads MCAAAPRGGGRAARRLG. Residues 1-60 are disordered; it reads MCAAAPRGGGRAARRLGAATAGSRVPSAAPRYSRRTRRVPIAYEAEPKPESPGPKWEPEN. The segment covering 15-24 has biased composition (low complexity); that stretch reads RLGAATAGSR. A HhH domain is found at 168–192; that stretch reads KYGGDIPGTVEELVKLPGVGPKMAH. Catalysis depends on lysine 189, which acts as the Nucleophile; for N-glycosylase activity. 4 residues coordinate [4Fe-4S] cluster: cysteine 259, cysteine 266, cysteine 269, and cysteine 275.

Belongs to the Nth/MutY family. The cofactor is [4Fe-4S] cluster.

Its subcellular location is the nucleus. It localises to the mitochondrion. It carries out the reaction 2'-deoxyribonucleotide-(2'-deoxyribose 5'-phosphate)-2'-deoxyribonucleotide-DNA = a 3'-end 2'-deoxyribonucleotide-(2,3-dehydro-2,3-deoxyribose 5'-phosphate)-DNA + a 5'-end 5'-phospho-2'-deoxyribonucleoside-DNA + H(+). In terms of biological role, bifunctional DNA N-glycosylase with associated apurinic/apyrimidinic (AP) lyase function that catalyzes the first step in base excision repair (BER), the primary repair pathway for the repair of oxidative DNA damage. The DNA N-glycosylase activity releases the damaged DNA base from DNA by cleaving the N-glycosidic bond, leaving an AP site. The AP lyase activity cleaves the phosphodiester bond 3' to the AP site by a beta-elimination. Primarily recognizes and repairs oxidative base damage of pyrimidines. This is Endonuclease III-like protein 1 from Gallus gallus (Chicken).